The following is a 551-amino-acid chain: Solute carrier family 22 member 4 (551 aa).

The Cytoplasmic portion of the chain corresponds to 1–20 (MRDYDEAIAFLGEWGPFQRL). The chain crosses the membrane as a helical span at residues 21–41 (IFFLLSASIIPNGFNGMSVVF). Residues 42 to 141 (LAGTPEHRCR…WNLVCEDNWK (100 aa)) lie on the Extracellular side of the membrane. N-linked (GlcNAc...) asparagine glycans are attached at residues asparagine 57, asparagine 64, and asparagine 91. The helical transmembrane segment at 142 to 162 (VPLTTSLFFVGVLLGSFVSGQ) threads the bilayer. The Cytoplasmic segment spans residues 163–171 (LSDRFGRKN). The helical transmembrane segment at 172-192 (VLFATMAVQTGFSFLQIFSIS) threads the bilayer. Residues 193 to 197 (WEMFT) are Extracellular-facing. Residues 198 to 218 (VLFLIVGMGQISNYVVAFILG) traverse the membrane as a helical segment. 218–225 (GTEILGKS) is an ATP binding site. The Cytoplasmic segment spans residues 219–232 (TEILGKSVRIIFST). The chain crosses the membrane as a helical span at residues 233-253 (LGVCTFFAVGYMLLPLFAYFI). At 254-257 (RDWR) the chain is on the extracellular side. The helical transmembrane segment at 258–278 (MLLLALTVPGVLCVPLWWFIP) threads the bilayer. Residues 279-337 (ESPRWLISQRRFREAEDIIQKAAKMNNIAVPAVIFDSVEELNPLKQQKAFILDLFRTWN) are Cytoplasmic-facing. The helical transmembrane segment at 338 to 358 (IAIMTIMSLLLWMLTSVGYFA) threads the bilayer. The Extracellular segment spans residues 359–371 (LSLDTPNLHGDAY). A helical membrane pass occupies residues 372-392 (LNCFLSALIEIPAYITAWLLL). The Cytoplasmic portion of the chain corresponds to 393–399 (RTLPRRY). The chain crosses the membrane as a helical span at residues 400–420 (IIAAVLFWGGGVLLFIQLVPV). Residues 421–426 (DYYFLS) lie on the Extracellular side of the membrane. The helical transmembrane segment at 427-447 (IGLVMLGKFGITSAFSMLYVF) threads the bilayer. Topologically, residues 448-460 (TAELYPTMVRNMA) are cytoplasmic. A helical membrane pass occupies residues 461 to 481 (VGVTSMASRVGSIIAPYFVYL). Over 482-486 (GAYNR) the chain is Extracellular. The helical transmembrane segment at 487-507 (MLPYIVMGSLTVLIGILTLFF) threads the bilayer. Residues 508 to 551 (PESLGMTLPETLEQMQKVKWFRSGKKTRDSMETEENPKVLITAF) lie on the Cytoplasmic side of the membrane.

It belongs to the major facilitator (TC 2.A.1) superfamily. Organic cation transporter (TC 2.A.1.19) family. Interacts with PDZK1.

The protein resides in the apical cell membrane. The protein localises to the basal cell membrane. It is found in the mitochondrion membrane. The catalysed reaction is ergothioneine(out) + Na(+)(out) = ergothioneine(in) + Na(+)(in). It carries out the reaction acetylcholine(in) = acetylcholine(out). The enzyme catalyses (R)-carnitine(out) + Na(+)(out) = (R)-carnitine(in) + Na(+)(in). It catalyses the reaction glycine betaine(out) + Na(+)(out) = glycine betaine(in) + Na(+)(in). Allosterically activated by intracellular ATP. Its function is as follows. Transporter that mediates the transport of endogenous and microbial zwitterions and organic cations. Functions as a Na(+)-dependent and pH-dependent high affinity microbial symporter of potent food-derived antioxidant ergothioeine. Transports one sodium ion with one ergothioeine molecule. Involved in the absorption of ergothioneine from the luminal/apical side of the small intestine and renal tubular cells, and into non-parenchymal liver cells, thereby contributing to maintain steady-state ergothioneine level in the body. Also mediates the bidirectional transport of acetycholine, although the exact transport mechanism has not been fully identified yet. Most likely exports anti-inflammatory acetylcholine in non-neuronal tissues, thereby contributing to the non-neuronal cholinergic system. Displays a general physiological role linked to better survival by controlling inflammation and oxidative stress, which may be related to ergothioneine and acetycholine transports. May also function as a low-affinity Na(+)-dependent transporter of L-carnitine through the mitochondrial membrane, thereby maintaining intracellular carnitine homeostasis. May contribute to regulate the transport of cationic compounds in testis across the blood-testis-barrier. This chain is Solute carrier family 22 member 4 (SLC22A4), found in Papio anubis (Olive baboon).